A 192-amino-acid chain; its full sequence is Thymidine kinase (192 aa).

ATP contacts are provided by residues 9-16 (STMNAGKS) and 87-90 (DEAQ). Glutamate 88 functions as the Proton acceptor in the catalytic mechanism. Positions 145, 147, 182, and 185 each coordinate Zn(2+).

Belongs to the thymidine kinase family. In terms of assembly, homotetramer.

It is found in the cytoplasm. The enzyme catalyses thymidine + ATP = dTMP + ADP + H(+). The protein is Thymidine kinase of Pasteurella multocida (strain Pm70).